The following is a 282-amino-acid chain: Parvulin-like PPIase (282 aa).

The signal sequence occupies residues 1 to 20 (MKKLSVIFLSVSMLSSIAFG). Residues 138–231 (KEQIKVAHIL…FGWHIIKVLE (94 aa)) form the PpiC domain.

This sequence belongs to the PpiC/parvulin rotamase family.

Its subcellular location is the cell outer membrane. The enzyme catalyses [protein]-peptidylproline (omega=180) = [protein]-peptidylproline (omega=0). The polypeptide is Parvulin-like PPIase (plp) (Rickettsia prowazekii (strain Madrid E)).